Consider the following 619-residue polypeptide: 1-deoxy-D-xylulose-5-phosphate synthase (619 aa).

Residues His-80 and 121–123 (GHS) each bind thiamine diphosphate. A Mg(2+)-binding site is contributed by Asp-152. Thiamine diphosphate contacts are provided by residues 153 to 154 (GA), Asn-181, Tyr-288, and Glu-370. Asn-181 contacts Mg(2+).

Belongs to the transketolase family. DXPS subfamily. In terms of assembly, homodimer. Mg(2+) is required as a cofactor. Thiamine diphosphate serves as cofactor.

The catalysed reaction is D-glyceraldehyde 3-phosphate + pyruvate + H(+) = 1-deoxy-D-xylulose 5-phosphate + CO2. It participates in metabolic intermediate biosynthesis; 1-deoxy-D-xylulose 5-phosphate biosynthesis; 1-deoxy-D-xylulose 5-phosphate from D-glyceraldehyde 3-phosphate and pyruvate: step 1/1. Functionally, catalyzes the acyloin condensation reaction between C atoms 2 and 3 of pyruvate and glyceraldehyde 3-phosphate to yield 1-deoxy-D-xylulose-5-phosphate (DXP). The chain is 1-deoxy-D-xylulose-5-phosphate synthase from Yersinia pestis (strain Pestoides F).